A 634-amino-acid polypeptide reads, in one-letter code: 1-deoxy-D-xylulose-5-phosphate synthase (634 aa).

Thiamine diphosphate contacts are provided by residues His-74 and 115 to 117 (AHS). Asp-146 contributes to the Mg(2+) binding site. Thiamine diphosphate is bound by residues 147–148 (GA), Asn-176, Tyr-283, and Glu-365. Position 176 (Asn-176) interacts with Mg(2+).

It belongs to the transketolase family. DXPS subfamily. As to quaternary structure, homodimer. Requires Mg(2+) as cofactor. It depends on thiamine diphosphate as a cofactor.

It catalyses the reaction D-glyceraldehyde 3-phosphate + pyruvate + H(+) = 1-deoxy-D-xylulose 5-phosphate + CO2. It participates in metabolic intermediate biosynthesis; 1-deoxy-D-xylulose 5-phosphate biosynthesis; 1-deoxy-D-xylulose 5-phosphate from D-glyceraldehyde 3-phosphate and pyruvate: step 1/1. Functionally, catalyzes the acyloin condensation reaction between C atoms 2 and 3 of pyruvate and glyceraldehyde 3-phosphate to yield 1-deoxy-D-xylulose-5-phosphate (DXP). This is 1-deoxy-D-xylulose-5-phosphate synthase from Burkholderia thailandensis (strain ATCC 700388 / DSM 13276 / CCUG 48851 / CIP 106301 / E264).